The following is a 156-amino-acid chain: ATP synthase subunit b (156 aa).

A helical membrane pass occupies residues 3 to 23 (ITFTIFAQSIAFAALIWIVAT).

This sequence belongs to the ATPase B chain family. F-type ATPases have 2 components, F(1) - the catalytic core - and F(0) - the membrane proton channel. F(1) has five subunits: alpha(3), beta(3), gamma(1), delta(1), epsilon(1). F(0) has three main subunits: a(1), b(2) and c(10-14). The alpha and beta chains form an alternating ring which encloses part of the gamma chain. F(1) is attached to F(0) by a central stalk formed by the gamma and epsilon chains, while a peripheral stalk is formed by the delta and b chains.

It localises to the cell inner membrane. In terms of biological role, f(1)F(0) ATP synthase produces ATP from ADP in the presence of a proton or sodium gradient. F-type ATPases consist of two structural domains, F(1) containing the extramembraneous catalytic core and F(0) containing the membrane proton channel, linked together by a central stalk and a peripheral stalk. During catalysis, ATP synthesis in the catalytic domain of F(1) is coupled via a rotary mechanism of the central stalk subunits to proton translocation. Its function is as follows. Component of the F(0) channel, it forms part of the peripheral stalk, linking F(1) to F(0). The chain is ATP synthase subunit b from Xylella fastidiosa (strain M12).